The sequence spans 223 residues: ATP phosphoribosyltransferase (223 aa).

Belongs to the ATP phosphoribosyltransferase family. Short subfamily. Heteromultimer composed of HisG and HisZ subunits.

Its subcellular location is the cytoplasm. The enzyme catalyses 1-(5-phospho-beta-D-ribosyl)-ATP + diphosphate = 5-phospho-alpha-D-ribose 1-diphosphate + ATP. Its pathway is amino-acid biosynthesis; L-histidine biosynthesis; L-histidine from 5-phospho-alpha-D-ribose 1-diphosphate: step 1/9. Functionally, catalyzes the condensation of ATP and 5-phosphoribose 1-diphosphate to form N'-(5'-phosphoribosyl)-ATP (PR-ATP). Has a crucial role in the pathway because the rate of histidine biosynthesis seems to be controlled primarily by regulation of HisG enzymatic activity. The sequence is that of ATP phosphoribosyltransferase from Sphingopyxis alaskensis (strain DSM 13593 / LMG 18877 / RB2256) (Sphingomonas alaskensis).